The sequence spans 348 residues: Small ribosomal subunit protein mS45 (348 aa).

Over residues 37-57 the composition is skewed to low complexity; that stretch reads SCSSSSPQSSQPTTHQQQCSS. Positions 37–63 are disordered; sequence SCSSSSPQSSQPTTHQQQCSSFSTTAP.

It belongs to the mitochondrion-specific ribosomal protein mS45 family. In terms of assembly, component of the mitochondrial small ribosomal subunit (mt-SSU). Mature N.crassa 74S mitochondrial ribosomes consist of a small (37S) and a large (54S) subunit. The 37S small subunit contains a 16S ribosomal RNA (16S mt-rRNA) and 32 different proteins. The 54S large subunit contains a 23S rRNA (23S mt-rRNA) and 42 different proteins.

The protein resides in the mitochondrion. Functionally, component of the mitochondrial ribosome (mitoribosome), a dedicated translation machinery responsible for the synthesis of mitochondrial genome-encoded proteins, including at least some of the essential transmembrane subunits of the mitochondrial respiratory chain. The mitoribosomes are attached to the mitochondrial inner membrane and translation products are cotranslationally integrated into the membrane. This Neurospora crassa (strain ATCC 24698 / 74-OR23-1A / CBS 708.71 / DSM 1257 / FGSC 987) protein is Small ribosomal subunit protein mS45 (mrps35).